Consider the following 481-residue polypeptide: Serine--tRNA ligase (481 aa).

Residue 284–286 coordinates L-serine; the sequence is TAE. Residue 315 to 317 participates in ATP binding; sequence RAE. E338 contacts L-serine. 405 to 408 contacts ATP; sequence EISS. S440 contributes to the L-serine binding site.

It belongs to the class-II aminoacyl-tRNA synthetase family. Type-1 seryl-tRNA synthetase subfamily. In terms of assembly, homodimer. The tRNA molecule binds across the dimer.

The protein resides in the cytoplasm. It carries out the reaction tRNA(Ser) + L-serine + ATP = L-seryl-tRNA(Ser) + AMP + diphosphate + H(+). It catalyses the reaction tRNA(Sec) + L-serine + ATP = L-seryl-tRNA(Sec) + AMP + diphosphate + H(+). Its pathway is aminoacyl-tRNA biosynthesis; selenocysteinyl-tRNA(Sec) biosynthesis; L-seryl-tRNA(Sec) from L-serine and tRNA(Sec): step 1/1. Its function is as follows. Catalyzes the attachment of serine to tRNA(Ser). Is also able to aminoacylate tRNA(Sec) with serine, to form the misacylated tRNA L-seryl-tRNA(Sec), which will be further converted into selenocysteinyl-tRNA(Sec). In Rhodopseudomonas palustris (strain BisB18), this protein is Serine--tRNA ligase.